The primary structure comprises 505 residues: Transcription factor VHR2 (505 aa).

Positions 1-16 are enriched in basic and acidic residues; the sequence is MIDDTENSKIHLEGSH. Disordered stretches follow at residues 1–23, 105–179, and 421–460; these read MIDDTENSKIHLEGSHKTGKYTG, NRKR…LPYP, and QSNPMRPHSTSEVLSAHSSTKDASTPGKEEPRVTRSSTSA. Low complexity predominate over residues 133–148; sequence PSSSNMGSCSASNASS. Residues 421–443 show a composition bias toward polar residues; that stretch reads QSNPMRPHSTSEVLSAHSSTKDA.

This sequence belongs to the VHR1 family.

It localises to the nucleus. Functionally, transcription factor that regulates ERG9, but seems to have a more global function in transcription. The chain is Transcription factor VHR2 (VHR2) from Saccharomyces cerevisiae (strain ATCC 204508 / S288c) (Baker's yeast).